The following is a 251-amino-acid chain: uncharacterized protein (251 aa).

4 helical membrane-spanning segments follow: residues Leu56–Ala76, Ile104–Thr124, His184–Val204, and Tyr208–Ser228.

The protein localises to the membrane. This is an uncharacterized protein from Caenorhabditis elegans.